We begin with the raw amino-acid sequence, 1357 residues long: DNA-directed RNA polymerase subunit beta (1357 aa).

It belongs to the RNA polymerase beta chain family. The RNAP catalytic core consists of 2 alpha, 1 beta, 1 beta' and 1 omega subunit. When a sigma factor is associated with the core the holoenzyme is formed, which can initiate transcription.

The catalysed reaction is RNA(n) + a ribonucleoside 5'-triphosphate = RNA(n+1) + diphosphate. DNA-dependent RNA polymerase catalyzes the transcription of DNA into RNA using the four ribonucleoside triphosphates as substrates. The polypeptide is DNA-directed RNA polymerase subunit beta (Pseudomonas paraeruginosa (strain DSM 24068 / PA7) (Pseudomonas aeruginosa (strain PA7))).